Consider the following 208-residue polypeptide: Small ribosomal subunit protein uS4 (208 aa).

The region spanning 98-161 (RRLDNVVYRL…RKSKRFKEVF (64 aa)) is the S4 RNA-binding domain.

The protein belongs to the universal ribosomal protein uS4 family. As to quaternary structure, part of the 30S ribosomal subunit. Contacts protein S5. The interaction surface between S4 and S5 is involved in control of translational fidelity.

One of the primary rRNA binding proteins, it binds directly to 16S rRNA where it nucleates assembly of the body of the 30S subunit. Its function is as follows. With S5 and S12 plays an important role in translational accuracy. The chain is Small ribosomal subunit protein uS4 from Halothermothrix orenii (strain H 168 / OCM 544 / DSM 9562).